Consider the following 639-residue polypeptide: ATP-dependent zinc metalloprotease FtsH (639 aa).

At 1 to 4 (MNST) the chain is on the cytoplasmic side. Residues 5–25 (VKTIVFWVFILACCILLWQVF) traverse the membrane as a helical segment. The Periplasmic portion of the chain corresponds to 26-104 (QRSSNTGKEQ…TVKDNSGSPW (79 aa)). The helical transmembrane segment at 105–125 (WSILIQFSPVLVLVALWFFMI) threads the bilayer. Over 126–639 (RQMQSGGNKA…GLPEGSPSPA (514 aa)) the chain is Cytoplasmic. 196–203 (GPPGTGKT) contributes to the ATP binding site. Position 418 (histidine 418) interacts with Zn(2+). Residue glutamate 419 is part of the active site. Zn(2+) contacts are provided by histidine 422 and aspartate 494. The tract at residues 597 to 639 (KDLPPLKPSGGSGTATTDDVQQVLKPSSDRGAGGLPEGSPSPA) is disordered.

The protein in the central section; belongs to the AAA ATPase family. In the C-terminal section; belongs to the peptidase M41 family. As to quaternary structure, homohexamer. It depends on Zn(2+) as a cofactor.

Its subcellular location is the cell inner membrane. Its function is as follows. Acts as a processive, ATP-dependent zinc metallopeptidase for both cytoplasmic and membrane proteins. Plays a role in the quality control of integral membrane proteins. The protein is ATP-dependent zinc metalloprotease FtsH of Acidobacterium capsulatum (strain ATCC 51196 / DSM 11244 / BCRC 80197 / JCM 7670 / NBRC 15755 / NCIMB 13165 / 161).